The sequence spans 52 residues: Large ribosomal subunit protein bL33 (52 aa).

The protein belongs to the bacterial ribosomal protein bL33 family.

In Helicobacter pylori (strain HPAG1), this protein is Large ribosomal subunit protein bL33.